Consider the following 315-residue polypeptide: Methionyl-tRNA formyltransferase (315 aa).

112–115 (SLLP) contacts (6S)-5,6,7,8-tetrahydrofolate.

The protein belongs to the Fmt family.

The enzyme catalyses L-methionyl-tRNA(fMet) + (6R)-10-formyltetrahydrofolate = N-formyl-L-methionyl-tRNA(fMet) + (6S)-5,6,7,8-tetrahydrofolate + H(+). Attaches a formyl group to the free amino group of methionyl-tRNA(fMet). The formyl group appears to play a dual role in the initiator identity of N-formylmethionyl-tRNA by promoting its recognition by IF2 and preventing the misappropriation of this tRNA by the elongation apparatus. This Leptospira interrogans serogroup Icterohaemorrhagiae serovar copenhageni (strain Fiocruz L1-130) protein is Methionyl-tRNA formyltransferase.